A 351-amino-acid polypeptide reads, in one-letter code: dTDP-glucose 4,6-dehydratase (351 aa).

Residues 12–13, 32–35, 58–59, 80–84, and Thr-99 each bind NAD(+); these read FI, DALT, DI, and FAAES. Residue Ser-84 coordinates substrate. Residue Thr-133 participates in substrate binding. The active-site Proton donor is Asp-134. Catalysis depends on proton acceptor residues Glu-135 and Tyr-158. 158-162 is a binding site for NAD(+); the sequence is YSASK. Asn-187 is a binding site for substrate. Residue Asn-188 participates in NAD(+) binding. Substrate-binding positions include 197 to 198, 213 to 215, Arg-222, Asn-257, and 289 to 293; these read KL, PVY, and DRPGH.

It belongs to the NAD(P)-dependent epimerase/dehydratase family. dTDP-glucose dehydratase subfamily. As to quaternary structure, homodimer. It depends on NAD(+) as a cofactor.

The enzyme catalyses dTDP-alpha-D-glucose = dTDP-4-dehydro-6-deoxy-alpha-D-glucose + H2O. Its pathway is carbohydrate biosynthesis; dTDP-L-rhamnose biosynthesis. It participates in bacterial outer membrane biogenesis; LPS O-antigen biosynthesis. In terms of biological role, catalyzes the dehydration of dTDP-D-glucose to form dTDP-6-deoxy-D-xylo-4-hexulose via a three-step process involving oxidation, dehydration and reduction. In Xanthomonas campestris pv. campestris (strain ATCC 33913 / DSM 3586 / NCPPB 528 / LMG 568 / P 25), this protein is dTDP-glucose 4,6-dehydratase (rfbB).